Reading from the N-terminus, the 200-residue chain is Ribosomal RNA large subunit methyltransferase E (200 aa).

S-adenosyl-L-methionine-binding residues include Gly-51, Trp-53, Asp-71, Asp-90, and Asp-112. The active-site Proton acceptor is the Lys-151.

This sequence belongs to the class I-like SAM-binding methyltransferase superfamily. RNA methyltransferase RlmE family.

The protein localises to the cytoplasm. It catalyses the reaction uridine(2552) in 23S rRNA + S-adenosyl-L-methionine = 2'-O-methyluridine(2552) in 23S rRNA + S-adenosyl-L-homocysteine + H(+). Specifically methylates the uridine in position 2552 of 23S rRNA at the 2'-O position of the ribose in the fully assembled 50S ribosomal subunit. The sequence is that of Ribosomal RNA large subunit methyltransferase E from Treponema pallidum (strain Nichols).